The following is a 160-amino-acid chain: Transcription elongation factor GreA (160 aa).

Residues 2-30 (SEKTYPMTLAEKEQLEQELEELKLVRRPE) adopt a coiled-coil conformation.

This sequence belongs to the GreA/GreB family.

In terms of biological role, necessary for efficient RNA polymerase transcription elongation past template-encoded arresting sites. The arresting sites in DNA have the property of trapping a certain fraction of elongating RNA polymerases that pass through, resulting in locked ternary complexes. Cleavage of the nascent transcript by cleavage factors such as GreA or GreB allows the resumption of elongation from the new 3'terminus. GreA releases sequences of 2 to 3 nucleotides. The chain is Transcription elongation factor GreA from Streptococcus mutans serotype c (strain ATCC 700610 / UA159).